A 471-amino-acid polypeptide reads, in one-letter code: Probable ribonuclease FAU-1 (471 aa).

The protein belongs to the FAU-1 family.

Its function is as follows. Probable RNase involved in rRNA stability through maturation and/or degradation of precursor rRNAs. Binds to RNA in loop regions with AU-rich sequences. In Aeropyrum pernix (strain ATCC 700893 / DSM 11879 / JCM 9820 / NBRC 100138 / K1), this protein is Probable ribonuclease FAU-1.